The sequence spans 382 residues: S-adenosylmethionine synthase (382 aa).

Position 16 (His16) interacts with ATP. Residue Asp18 participates in Mg(2+) binding. Glu44 contacts K(+). 2 residues coordinate L-methionine: Glu57 and Gln100. The flexible loop stretch occupies residues 100–110 (QSPDIAQGVDN). Residues 165-167 (DAK), 231-232 (RF), Asp240, 246-247 (RK), and Lys267 contribute to the ATP site. Asp240 is an L-methionine binding site. Residue Lys271 participates in L-methionine binding.

This sequence belongs to the AdoMet synthase family. As to quaternary structure, homotetramer; dimer of dimers. Mg(2+) serves as cofactor. It depends on K(+) as a cofactor.

It localises to the cytoplasm. It catalyses the reaction L-methionine + ATP + H2O = S-adenosyl-L-methionine + phosphate + diphosphate. Its pathway is amino-acid biosynthesis; S-adenosyl-L-methionine biosynthesis; S-adenosyl-L-methionine from L-methionine: step 1/1. In terms of biological role, catalyzes the formation of S-adenosylmethionine (AdoMet) from methionine and ATP. The overall synthetic reaction is composed of two sequential steps, AdoMet formation and the subsequent tripolyphosphate hydrolysis which occurs prior to release of AdoMet from the enzyme. The chain is S-adenosylmethionine synthase from Legionella pneumophila (strain Lens).